The primary structure comprises 186 residues: UPF0340 protein SZO_02480 (186 aa).

This sequence belongs to the UPF0340 family.

The protein is UPF0340 protein SZO_02480 of Streptococcus equi subsp. zooepidemicus (strain H70).